Here is a 283-residue protein sequence, read N- to C-terminus: MEIVKMHGLGNDFVFIDHFQGAPAELPDYPELARKLCHRQFGVGGDGLIMVLPSDKADARMRILNSDGSEPEMCGNGIRCFARYIYDQGYVSQNPLQVETLAGILTLQLSITGDQVTGVRVDMGEPILKSEQVPVLIQGDPVVGARLDVDGQEFEFTAVSMGNPHCVLFVEDYETLDFERIGPAIEKHPLFPRKTNVEFIIVNSPRELTMKVWERGAGPTLACGTGACASVVAAVLNGRTERKVTVHLPGGDLLIEWGEDNRVYMTGPAAYVFKGVLLEDALS.

Positions 11 and 65 each coordinate substrate. Cys-74 serves as the catalytic Proton donor. Substrate is bound by residues 75-76 (GN), Asn-163, Asn-196, and 214-215 (ER). Cys-223 acts as the Proton acceptor in catalysis. 224 to 225 (GT) is a substrate binding site.

The protein belongs to the diaminopimelate epimerase family. As to quaternary structure, homodimer.

The protein resides in the cytoplasm. It catalyses the reaction (2S,6S)-2,6-diaminopimelate = meso-2,6-diaminopimelate. It participates in amino-acid biosynthesis; L-lysine biosynthesis via DAP pathway; DL-2,6-diaminopimelate from LL-2,6-diaminopimelate: step 1/1. Catalyzes the stereoinversion of LL-2,6-diaminopimelate (L,L-DAP) to meso-diaminopimelate (meso-DAP), a precursor of L-lysine and an essential component of the bacterial peptidoglycan. The chain is Diaminopimelate epimerase from Desulfitobacterium hafniense (strain DSM 10664 / DCB-2).